A 149-amino-acid polypeptide reads, in one-letter code: Nucleoside diphosphate kinase (149 aa).

Residues lysine 9, phenylalanine 57, arginine 85, threonine 91, arginine 102, and asparagine 112 each contribute to the ATP site. Histidine 115 acts as the Pros-phosphohistidine intermediate in catalysis.

This sequence belongs to the NDK family. Homotetramer. The cofactor is Mg(2+).

Its subcellular location is the cytoplasm. It catalyses the reaction a 2'-deoxyribonucleoside 5'-diphosphate + ATP = a 2'-deoxyribonucleoside 5'-triphosphate + ADP. It carries out the reaction a ribonucleoside 5'-diphosphate + ATP = a ribonucleoside 5'-triphosphate + ADP. Major role in the synthesis of nucleoside triphosphates other than ATP. The ATP gamma phosphate is transferred to the NDP beta phosphate via a ping-pong mechanism, using a phosphorylated active-site intermediate. The sequence is that of Nucleoside diphosphate kinase from Carboxydothermus hydrogenoformans (strain ATCC BAA-161 / DSM 6008 / Z-2901).